The primary structure comprises 537 residues: MAGQKQELPVSGEPLAVESPMTNKKKKKSKKNKHTEENHEVEEVPQEVTNGVEEELSNKEKKKKRKREEKESEKNKKKDVPEKKLEAEDLGEGESEQQKVVVTGKGVEEAKYAALKTFAESNLPENVLDCCKTFEKPSPIQSHTWPFLLDGRDLIGIAKTGSGKTLAFGIPAIMHVLKKNKKIGGGSKKVNPTCLVLSPTRELAVQISDVLREAGEPCGLKSICVYGGSSKGPQISAIRSGVDIVIGTPGRLRDLIESNVLRLSDVSFVVLDEADRMLDMGFEEPVRFILSNTNKVRQMVMFSATWPLDVHKLAQEFMDPNPIKVIIGSVDLAANHDVMQIIEVLDERARDQRLIALLEKYHKSQKNRVLVFALYKVEAERLERFLQQRGWKAVSIHGNKAQSERTRSLSLFKEGSCPLLVATDVAARGLDIPDVEVVINYTFPLTTEDYVHRIGRTGRAGKKGVAHTFFTPLNKGLAGELVNVLREAGQVVPADLLKFGTHVKKKESKLYGAHFKEIAADAPKATKITFDNSDDED.

The tract at residues 1-97 (MAGQKQELPV…EDLGEGESEQ (97 aa)) is disordered. A coiled-coil region spans residues 22–80 (TNKKKKKSKKNKHTEENHEVEEVPQEVTNGVEEELSNKEKKKKRKREEKESEKNKKKDV). The segment covering 23–33 (NKKKKKSKKNK) has biased composition (basic residues). The span at 68-87 (EEKESEKNKKKDVPEKKLEA) shows a compositional bias: basic and acidic residues. The Q motif motif lies at 116-142 (KTFAESNLPENVLDCCKTFEKPSPIQS). In terms of domain architecture, Helicase ATP-binding spans 145-324 (WPFLLDGRDL…QEFMDPNPIK (180 aa)). 158–165 (AKTGSGKT) is a binding site for ATP. The DEAD box signature appears at 272-275 (DEAD). In terms of domain architecture, Helicase C-terminal spans 349–500 (ARDQRLIALL…VVPADLLKFG (152 aa)). Position 533 is a phosphoserine (Ser-533).

It belongs to the DEAD box helicase family. DDX5/DBP2 subfamily.

The protein localises to the nucleus. The protein resides in the nucleolus. The enzyme catalyses ATP + H2O = ADP + phosphate + H(+). In terms of biological role, ATP-dependent RNA helicase required for 60S ribosomal subunit synthesis. Involved in efficient pre-rRNA processing, predominantly at site A3, which is necessary for the normal formation of 25S and 5.8S rRNAs. In Arabidopsis thaliana (Mouse-ear cress), this protein is DEAD-box ATP-dependent RNA helicase 5 (RH5).